A 312-amino-acid chain; its full sequence is Porphobilinogen deaminase (312 aa).

Cys241 bears the S-(dipyrrolylmethanemethyl)cysteine mark.

Belongs to the HMBS family. As to quaternary structure, monomer. It depends on dipyrromethane as a cofactor.

The catalysed reaction is 4 porphobilinogen + H2O = hydroxymethylbilane + 4 NH4(+). It participates in porphyrin-containing compound metabolism; protoporphyrin-IX biosynthesis; coproporphyrinogen-III from 5-aminolevulinate: step 2/4. The protein operates within porphyrin-containing compound metabolism; chlorophyll biosynthesis. In terms of biological role, tetrapolymerization of the monopyrrole PBG into the hydroxymethylbilane pre-uroporphyrinogen in several discrete steps. In Chlorobaculum parvum (strain DSM 263 / NCIMB 8327) (Chlorobium vibrioforme subsp. thiosulfatophilum), this protein is Porphobilinogen deaminase (hemC).